We begin with the raw amino-acid sequence, 235 residues long: Octanoyltransferase (235 aa).

Residues 44–231 (DTTADELWLV…HQVGLPNENN (188 aa)) form the BPL/LPL catalytic domain. Substrate is bound by residues 83 to 90 (RGGQVTYH), 150 to 152 (SLG), and 163 to 165 (GLA). Cys181 functions as the Acyl-thioester intermediate in the catalytic mechanism.

Belongs to the LipB family.

The protein resides in the cytoplasm. It catalyses the reaction octanoyl-[ACP] + L-lysyl-[protein] = N(6)-octanoyl-L-lysyl-[protein] + holo-[ACP] + H(+). It functions in the pathway protein modification; protein lipoylation via endogenous pathway; protein N(6)-(lipoyl)lysine from octanoyl-[acyl-carrier-protein]: step 1/2. Functionally, catalyzes the transfer of endogenously produced octanoic acid from octanoyl-acyl-carrier-protein onto the lipoyl domains of lipoate-dependent enzymes. Lipoyl-ACP can also act as a substrate although octanoyl-ACP is likely to be the physiological substrate. In Colwellia psychrerythraea (strain 34H / ATCC BAA-681) (Vibrio psychroerythus), this protein is Octanoyltransferase.